Reading from the N-terminus, the 1215-residue chain is Homeodomain-interacting protein kinase 3 (1215 aa).

Residue Lys-27 forms a Glycyl lysine isopeptide (Lys-Gly) (interchain with G-Cter in SUMO2) linkage. The Protein kinase domain occupies 197 to 525 (YEVLDFLGRG…PAETLNHPFV (329 aa)). ATP is bound by residues 203-211 (LGRGTFGQV) and Lys-226. Asp-322 functions as the Proton acceptor in the catalytic mechanism. Tyr-359 carries the post-translational modification Phosphotyrosine. An interaction with AR region spans residues 767-944 (QNRGILVKLM…NSMSDEEQES (178 aa)). An interaction with FAS region spans residues 796-891 (NTNIPHSAFI…SQRHSLRECK (96 aa)). The tract at residues 855–1011 (QTIIIADSPS…ENGLNADEHM (157 aa)) is required for localization to nuclear speckles. An SUMO interaction motifs (SIM); required for nuclear localization and kinase activity region spans residues 866 to 918 (AVSVITISSDTDEEETSQRHSLRECKGSLDCEACQSTLNIDRMCSLSSPDSTL). Residues 870-880 (ITISSDTDEEE) are interaction with UBL1. A compositionally biased stretch (low complexity) spans 912–929 (SSPDSTLSTSSSGQSSPS). The tract at residues 912–987 (SSPDSTLSTS…ELVSSADTET (76 aa)) is disordered. Polar residues predominate over residues 945-957 (SCDTVDGSPTSDS). A Glycyl lysine isopeptide (Lys-Gly) (interchain with G-Cter in SUMO) cross-link involves residue Lys-1208.

The protein belongs to the protein kinase superfamily. CMGC Ser/Thr protein kinase family. HIPK subfamily. In terms of assembly, interacts with Nkx1-2. Interacts with FAS and DAXX. Probably part of a complex consisting of HIPK3, FAS and FADD. Interacts with and stabilizes ligand-bound androgen receptor (AR). Interacts with UBL1/SUMO-1. Binds to NR5A1/SF1, SPEN/MINT and RUNX2. Post-translationally, autophosphorylated, but autophosphorylation is not required for catalytic activity. May be sumoylated. As to expression, overexpressed in multidrug resistant cells. Highly expressed in heart and skeletal muscle, and at lower levels in placenta, pancreas, brain, spleen, prostate, thymus, testis, small intestine, colon and leukocytes. Not found in liver and lung.

Its subcellular location is the cytoplasm. The protein localises to the nucleus. It catalyses the reaction L-seryl-[protein] + ATP = O-phospho-L-seryl-[protein] + ADP + H(+). The catalysed reaction is L-threonyl-[protein] + ATP = O-phospho-L-threonyl-[protein] + ADP + H(+). In terms of biological role, serine/threonine-protein kinase involved in transcription regulation, apoptosis and steroidogenic gene expression. Phosphorylates JUN and RUNX2. Seems to negatively regulate apoptosis by promoting FADD phosphorylation. Enhances androgen receptor-mediated transcription. May act as a transcriptional corepressor for NK homeodomain transcription factors. The phosphorylation of NR5A1 activates SF1 leading to increased steroidogenic gene expression upon cAMP signaling pathway stimulation. In osteoblasts, supports transcription activation: phosphorylates RUNX2 that synergizes with SPEN/MINT to enhance FGFR2-mediated activation of the osteocalcin FGF-responsive element (OCFRE). The polypeptide is Homeodomain-interacting protein kinase 3 (HIPK3) (Homo sapiens (Human)).